The sequence spans 364 residues: Aminomethyltransferase (364 aa).

The protein belongs to the GcvT family. As to quaternary structure, the glycine cleavage system is composed of four proteins: P, T, L and H.

It carries out the reaction N(6)-[(R)-S(8)-aminomethyldihydrolipoyl]-L-lysyl-[protein] + (6S)-5,6,7,8-tetrahydrofolate = N(6)-[(R)-dihydrolipoyl]-L-lysyl-[protein] + (6R)-5,10-methylene-5,6,7,8-tetrahydrofolate + NH4(+). In terms of biological role, the glycine cleavage system catalyzes the degradation of glycine. This is Aminomethyltransferase from Escherichia coli (strain SMS-3-5 / SECEC).